The sequence spans 401 residues: Divinyl chlorophyllide a 8-vinyl-reductase, chloroplastic (401 aa).

Residues 1–10 (MATILLSSRL) are compositionally biased toward polar residues. The tract at residues 1 to 26 (MATILLSSRLPTTGTATPSPTRPAPR) is disordered. The N-terminal 54 residues, 1–54 (MATILLSSRLPTTGTATPSPTRPAPRFLSFPGTAIRRRGRGPLLASSAVSPPAP), are a transit peptide targeting the chloroplast.

The protein resides in the plastid. It localises to the chloroplast. The catalysed reaction is protochlorophyllide a + NADP(+) = 3,8-divinyl protochlorophyllide a + NADPH + H(+). It functions in the pathway porphyrin-containing compound metabolism; chlorophyll biosynthesis. In terms of biological role, catalyzes the conversion of divinyl chlorophyllide to monovinyl chlorophyllide. Reduces the 8-vinyl group of the tetrapyrrole to an ethyl group using NADPH as the reductant. Can use (3,8-divinyl)-chlorophyllide a (DV-Chlidea) &gt; (3,8-divinyl)-chlorophyll a (DV-Chla) &gt; (3,8-divinyl)-protochlorophyllide a (DV-Pchlidea) &gt; (3,8-divinyl)-magnesium-protoporphyrin IX monomethyl ester (DV-MPE) &gt; (3,8-divinyl)-magnesium-protoporphyrin IX (DV-Mg-Proto) as substrates. This Zea mays (Maize) protein is Divinyl chlorophyllide a 8-vinyl-reductase, chloroplastic (DVR).